Consider the following 182-residue polypeptide: uncharacterized protein (182 aa).

The protein belongs to the staphylococcal tandem lipoprotein family.

This is an uncharacterized protein from Staphylococcus haemolyticus (strain JCSC1435).